The following is a 146-amino-acid chain: Cytochrome b5 type B (146 aa).

Positions 1-11 (MATPEASGSGE) are excised as a propeptide. At Ser19 the chain carries Phosphoserine. The Cytochrome b5 heme-binding domain occupies 20–96 (VTYYRLEEVA…LKQYYIGDVH (77 aa)). Lys30 carries the N6-acetyllysine modification. Ser33 bears the Phosphoserine mark. Residues His55 and His79 each contribute to the heme site. At Ser80 the chain carries Phosphoserine. Residues 119–136 (WAYWFVPIVGAILIGFLY) form a helical membrane-spanning segment.

It belongs to the cytochrome b5 family. In terms of assembly, component of a complex composed of cytochrome b5, NADH-cytochrome b5 reductase (CYB5R3) and MTARC2.

It is found in the mitochondrion outer membrane. Functionally, cytochrome b5 is a membrane-bound hemoprotein functioning as an electron carrier for several membrane-bound oxygenases. This Mus musculus (Mouse) protein is Cytochrome b5 type B (Cyb5b).